Consider the following 435-residue polypeptide: GTPase Obg (435 aa).

An Obg domain is found at 6–164 (ADFVDRVKIF…RWLELELKIL (159 aa)). One can recognise an OBG-type G domain in the interval 165-335 (ADVGLVGYPN…LVSKLASIVR (171 aa)). GTP-binding positions include 171-178 (GYPNVGKS), 196-200 (FTTLI), 217-220 (DIPG), 287-290 (NKID), and 316-318 (SAL). Positions 178 and 198 each coordinate Mg(2+). The OCT domain maps to 357–435 (RRLPEKFHLE…IGDFEFEYRE (79 aa)).

The protein belongs to the TRAFAC class OBG-HflX-like GTPase superfamily. OBG GTPase family. Monomer. Mg(2+) serves as cofactor.

The protein localises to the cytoplasm. Functionally, an essential GTPase which binds GTP, GDP and possibly (p)ppGpp with moderate affinity, with high nucleotide exchange rates and a fairly low GTP hydrolysis rate. Plays a role in control of the cell cycle, stress response, ribosome biogenesis and in those bacteria that undergo differentiation, in morphogenesis control. The sequence is that of GTPase Obg from Thermotoga sp. (strain RQ2).